We begin with the raw amino-acid sequence, 100 residues long: uncharacterized protein (100 aa).

Residues 78–100 are disordered; the sequence is NNGNLDFKGRADERRQPVSNLRM. A compositionally biased stretch (basic and acidic residues) spans 84-93; that stretch reads FKGRADERRQ.

This is an uncharacterized protein from Saccharomyces cerevisiae (strain ATCC 204508 / S288c) (Baker's yeast).